A 99-amino-acid chain; its full sequence is MAQLHRWDFWCFSTKPLGYLDVVQAIEAEVYDAWRQLRQSANPSKAWHQWKSETRKLFQDLDKKLRGQQEAVVHVAHATFTVAEMQYRQCGGEASHIVF.

The short motif at 35–55 (RQLRQSANPSKAWHQWKSETR) is the RxLR-dEER element.

This sequence belongs to the RxLR effector family.

The protein localises to the secreted. Its subcellular location is the host nucleus. It is found in the host cytoplasm. Secreted effector that completely suppresses the host cell death induced by cell death-inducing proteins. The protein is Secreted RxLR effector protein 94 of Plasmopara viticola (Downy mildew of grapevine).